Consider the following 311-residue polypeptide: DNA repair and recombination protein RadA (311 aa).

104-111 (GEFGSGKS) is an ATP binding site.

The protein belongs to the eukaryotic RecA-like protein family.

Its function is as follows. Involved in DNA repair and in homologous recombination. Binds and assemble on single-stranded DNA to form a nucleoprotein filament. Hydrolyzes ATP in a ssDNA-dependent manner and promotes DNA strand exchange between homologous DNA molecules. This chain is DNA repair and recombination protein RadA, found in Methanobrevibacter smithii (strain ATCC 35061 / DSM 861 / OCM 144 / PS).